A 90-amino-acid polypeptide reads, in one-letter code: Small ribosomal subunit protein uS15 (90 aa).

The protein belongs to the universal ribosomal protein uS15 family. As to quaternary structure, part of the 30S ribosomal subunit. Forms a bridge to the 50S subunit in the 70S ribosome, contacting the 23S rRNA.

Functionally, one of the primary rRNA binding proteins, it binds directly to 16S rRNA where it helps nucleate assembly of the platform of the 30S subunit by binding and bridging several RNA helices of the 16S rRNA. Its function is as follows. Forms an intersubunit bridge (bridge B4) with the 23S rRNA of the 50S subunit in the ribosome. The sequence is that of Small ribosomal subunit protein uS15 from Wolbachia pipientis wMel.